The sequence spans 308 residues: 4-diphosphocytidyl-2-C-methyl-D-erythritol kinase (308 aa).

Lysine 23 is a catalytic residue. 108–118 (PVAAGIGGGSA) is an ATP binding site. Residue aspartate 150 is part of the active site.

This sequence belongs to the GHMP kinase family. IspE subfamily.

The catalysed reaction is 4-CDP-2-C-methyl-D-erythritol + ATP = 4-CDP-2-C-methyl-D-erythritol 2-phosphate + ADP + H(+). It functions in the pathway isoprenoid biosynthesis; isopentenyl diphosphate biosynthesis via DXP pathway; isopentenyl diphosphate from 1-deoxy-D-xylulose 5-phosphate: step 3/6. Catalyzes the phosphorylation of the position 2 hydroxy group of 4-diphosphocytidyl-2C-methyl-D-erythritol. In Nitrobacter winogradskyi (strain ATCC 25391 / DSM 10237 / CIP 104748 / NCIMB 11846 / Nb-255), this protein is 4-diphosphocytidyl-2-C-methyl-D-erythritol kinase.